We begin with the raw amino-acid sequence, 577 residues long: Methionine--tRNA ligase, mitochondrial (577 aa).

The short motif at 25–37 (PIFYVNAAPHIGH) is the 'HIGH' region element. The short motif at 329-333 (KMSKS) is the 'KMSKS' region element. Lys-332 serves as a coordination point for ATP.

The protein belongs to the class-I aminoacyl-tRNA synthetase family.

It localises to the mitochondrion matrix. It carries out the reaction tRNA(Met) + L-methionine + ATP = L-methionyl-tRNA(Met) + AMP + diphosphate. The polypeptide is Methionine--tRNA ligase, mitochondrial (MSM1) (Candida albicans (Yeast)).